The primary structure comprises 209 residues: Redox-sensing transcriptional repressor Rex (209 aa).

The H-T-H motif DNA-binding region spans 16 to 55 (LYYRFIQNLSLSGKQRVSSAELSEAVKVDSATIRRDFSYF). An NAD(+)-binding site is contributed by 90-95 (GVGNLG).

Belongs to the transcriptional regulatory Rex family. As to quaternary structure, homodimer.

The protein localises to the cytoplasm. In terms of biological role, modulates transcription in response to changes in cellular NADH/NAD(+) redox state. In Bacillus cereus (strain G9842), this protein is Redox-sensing transcriptional repressor Rex.